A 192-amino-acid chain; its full sequence is MKNLFRPLIVLFVVLAALTGLAYPAVMTAFGQAVFHDQANGSMLEQDGKVVGSKLIGQQFDAPQYFWGRLSATSPMPYNAQGSSGSNLGPTNPALLDEIKGRIDALKAAGTDMSKPVPVDLVTSSGSGLDPEISPAAAAYQIERVARARKLAPNDVQALVDRYTSGRQFGILGEARVNVLQLNLALDEMKRG.

A helical transmembrane segment spans residues 7–27 (PLIVLFVVLAALTGLAYPAVM).

Belongs to the KdpC family. The system is composed of three essential subunits: KdpA, KdpB and KdpC.

It localises to the cell inner membrane. Its function is as follows. Part of the high-affinity ATP-driven potassium transport (or Kdp) system, which catalyzes the hydrolysis of ATP coupled with the electrogenic transport of potassium into the cytoplasm. This subunit acts as a catalytic chaperone that increases the ATP-binding affinity of the ATP-hydrolyzing subunit KdpB by the formation of a transient KdpB/KdpC/ATP ternary complex. This is Potassium-transporting ATPase KdpC subunit from Paraburkholderia xenovorans (strain LB400).